The primary structure comprises 270 residues: uncharacterized protein (270 aa).

10 helical membrane passes run 12 to 32, 35 to 55, 64 to 84, 88 to 108, 117 to 137, 138 to 158, 171 to 191, 194 to 214, 226 to 246, and 248 to 268; these read AAIVLSAVLMGTVSVFVRNVG, TLSVTFLRLFFGFLAVLPFCL, TLLGLAVFNFLTVASYIAAIQ, VAMAALLLYMAPVYVIPLSVL, TLLALPLGLIGLYLMLTPYAE, LTFGIIFGIVSGLSYAIVFVL, ITFYNLGLGSAALLPYFLMFG, GSWLWAIGLGVVPTAVPFVLF, APILALIEPLCAGLVGYFYFG, and TLTLTQLIGGAMILAGVLIAW. EamA domains lie at 19 to 133 and 150 to 269; these read VLMG…LMLT and LSYA…IAWR.

It belongs to the EamA transporter family.

It is found in the cell membrane. This is an uncharacterized protein from Archaeoglobus fulgidus (strain ATCC 49558 / DSM 4304 / JCM 9628 / NBRC 100126 / VC-16).